The sequence spans 858 residues: Heat shock protein 105 kDa (858 aa).

N-acetylserine is present on Ser-2. The residue at position 471 (Lys-471) is an N6-acetyllysine. Disordered regions lie at residues 500 to 584 (KVPT…PPEA) and 796 to 858 (CEPV…MDLD). Over residues 504–514 (EENEMSSEADM) the composition is skewed to acidic residues. A phosphoserine mark is found at Ser-509 and Ser-510. The segment covering 532 to 554 (QQDNSEAGTQPQVQTDAQQTSQS) has biased composition (polar residues). Phosphoserine is present on Ser-557. Thr-561 is subject to Phosphothreonine. Composition is skewed to basic and acidic residues over residues 563–584 (EENKIPDADKANEKKVDQPPEA) and 805–814 (PKIESPKLER). At Ser-809 the chain carries Phosphoserine. Thr-815 is modified (phosphothreonine). Residues 821–832 (IDKKEEDLEDKN) are compositionally biased toward basic and acidic residues. The segment covering 849–858 (EKNSVNMDLD) has biased composition (polar residues).

This sequence belongs to the heat shock protein 70 family. In terms of assembly, interacts with HSPA8/HSC70. Interacts with HSPA1A (via NBD) and HSPA1B (via NBD). Post-translationally, phosphorylation on Ser-509 may be important for regulation of the HSPA8/HSC70 chaperone activity.

The protein resides in the cytoplasm. Acts as a nucleotide-exchange factor (NEF) for chaperone proteins HSPA1A and HSPA1B, promoting the release of ADP from HSPA1A/B thereby triggering substrate release. Prevents the aggregation of denatured proteins in cells under severe stress, on which the ATP levels decrease markedly. Inhibits HSPA8/HSC70 ATPase and chaperone activities. This is Heat shock protein 105 kDa (HSPH1) from Pongo abelii (Sumatran orangutan).